The sequence spans 321 residues: Glucokinase (321 aa).

Residue 8-13 (GDVGGT) coordinates ATP.

Belongs to the bacterial glucokinase family.

Its subcellular location is the cytoplasm. The catalysed reaction is D-glucose + ATP = D-glucose 6-phosphate + ADP + H(+). The polypeptide is Glucokinase (Pectobacterium atrosepticum (strain SCRI 1043 / ATCC BAA-672) (Erwinia carotovora subsp. atroseptica)).